We begin with the raw amino-acid sequence, 165 residues long: Growth arrest and DNA damage-inducible protein GADD45 alpha (165 aa).

Thr-2 carries the phosphothreonine modification.

The protein belongs to the GADD45 family. In terms of assembly, interacts with AURKA, GADD45GIP1 and PCNA. Interacts with MAPK14.

The protein resides in the nucleus. Functionally, might affect PCNA interaction with some CDK (cell division protein kinase) complexes; stimulates DNA excision repair in vitro and inhibits entry of cells into S phase. In T-cells, functions as a regulator of p38 MAPKs by inhibiting p88 phosphorylation and activity. The sequence is that of Growth arrest and DNA damage-inducible protein GADD45 alpha (Gadd45a) from Mus musculus (Mouse).